We begin with the raw amino-acid sequence, 431 residues long: BEL1-like homeodomain protein 5 (431 aa).

Residues 80-96 (PIYLKAAQELLNEIVNV) are SR/KY domain. The segment at 128–199 (GVAALQMKKA…AVKDMISLQI (72 aa)) is BELL domain. Positions 228-290 (AWRPQRGLPE…NARVRMWKPL (63 aa)) form a DNA-binding region, homeobox. A compositionally biased stretch (basic and acidic residues) spans 302-312 (EESRKGSDRYS). The segment at 302-333 (EESRKGSDRYSTKGSSSKQPYNNTTSNESSNT) is disordered. The segment covering 313-322 (TKGSSSKQPY) has biased composition (polar residues). Over residues 323–333 (NNTTSNESSNT) the composition is skewed to low complexity.

This sequence belongs to the TALE/BELL homeobox family. In terms of assembly, may form heterodimeric complexes with TALE/KNOX proteins. Interacts with OFP1.

It is found in the nucleus. The sequence is that of BEL1-like homeodomain protein 5 (BLH5) from Arabidopsis thaliana (Mouse-ear cress).